A 165-amino-acid chain; its full sequence is Nascent polypeptide-associated complex subunit alpha (165 aa).

The NAC-A/B domain occupies 14 to 78; the sequence is NRNEKKAREL…AKVDNFTQRL (65 aa). The UBA domain maps to 126–165; that stretch reads LSNDDIDLVVQQTNATKGQAIKALKEHNGDIVNAIMSLSK.

Belongs to the NAC-alpha family. As to quaternary structure, part of the nascent polypeptide-associated complex (NAC), consisting of EGD2 and EGD1. NAC associates with ribosomes via EGD1.

It is found in the cytoplasm. Its subcellular location is the nucleus. Its function is as follows. Component of the nascent polypeptide-associated complex (NAC), a dynamic component of the ribosomal exit tunnel, protecting the emerging polypeptides from interaction with other cytoplasmic proteins to ensure appropriate nascent protein targeting. The NAC complex also promotes mitochondrial protein import by enhancing productive ribosome interactions with the outer mitochondrial membrane and blocks the inappropriate interaction of ribosomes translating non-secretory nascent polypeptides with translocation sites in the membrane of the endoplasmic reticulum. EGD2 may also be involved in transcription regulation. The protein is Nascent polypeptide-associated complex subunit alpha (EGD2) of Candida glabrata (strain ATCC 2001 / BCRC 20586 / JCM 3761 / NBRC 0622 / NRRL Y-65 / CBS 138) (Yeast).